The chain runs to 263 residues: Ribonuclease HII (263 aa).

The RNase H type-2 domain maps to 74–262 (EHVAGLDEVG…VQETAATRQT (189 aa)). A divalent metal cation-binding residues include Asp-80, Glu-81, and Asp-172.

It belongs to the RNase HII family. Mn(2+) serves as cofactor. Requires Mg(2+) as cofactor.

The protein resides in the cytoplasm. It carries out the reaction Endonucleolytic cleavage to 5'-phosphomonoester.. Endonuclease that specifically degrades the RNA of RNA-DNA hybrids. This is Ribonuclease HII (rnhB) from Halalkalibacterium halodurans (strain ATCC BAA-125 / DSM 18197 / FERM 7344 / JCM 9153 / C-125) (Bacillus halodurans).